A 231-amino-acid polypeptide reads, in one-letter code: Large ribosomal subunit protein uL1 (231 aa).

The protein belongs to the universal ribosomal protein uL1 family. As to quaternary structure, part of the 50S ribosomal subunit.

Functionally, binds directly to 23S rRNA. The L1 stalk is quite mobile in the ribosome, and is involved in E site tRNA release. Protein L1 is also a translational repressor protein, it controls the translation of the L11 operon by binding to its mRNA. This is Large ribosomal subunit protein uL1 from Staphylococcus haemolyticus (strain JCSC1435).